The following is a 241-amino-acid chain: 2-C-methyl-D-erythritol 4-phosphate cytidylyltransferase (241 aa).

This sequence belongs to the IspD/TarI cytidylyltransferase family. IspD subfamily. Homodimer.

The enzyme catalyses 2-C-methyl-D-erythritol 4-phosphate + CTP + H(+) = 4-CDP-2-C-methyl-D-erythritol + diphosphate. It participates in isoprenoid biosynthesis; isopentenyl diphosphate biosynthesis via DXP pathway; isopentenyl diphosphate from 1-deoxy-D-xylulose 5-phosphate: step 2/6. Its function is as follows. Catalyzes the formation of 4-diphosphocytidyl-2-C-methyl-D-erythritol from CTP and 2-C-methyl-D-erythritol 4-phosphate (MEP). The sequence is that of 2-C-methyl-D-erythritol 4-phosphate cytidylyltransferase from Yersinia pseudotuberculosis serotype I (strain IP32953).